Consider the following 240-residue polypeptide: UDP-2,3-diacylglucosamine hydrolase (240 aa).

Mn(2+)-binding residues include Asp7, His9, Asp40, Asn78, and His113. 78–79 provides a ligand contact to substrate; that stretch reads NR. Positions 121, 159, 163, 166, and 194 each coordinate substrate. Residues His194 and His196 each coordinate Mn(2+).

Belongs to the LpxH family. The cofactor is Mn(2+).

The protein resides in the cell inner membrane. It carries out the reaction UDP-2-N,3-O-bis[(3R)-3-hydroxytetradecanoyl]-alpha-D-glucosamine + H2O = 2-N,3-O-bis[(3R)-3-hydroxytetradecanoyl]-alpha-D-glucosaminyl 1-phosphate + UMP + 2 H(+). It functions in the pathway glycolipid biosynthesis; lipid IV(A) biosynthesis; lipid IV(A) from (3R)-3-hydroxytetradecanoyl-[acyl-carrier-protein] and UDP-N-acetyl-alpha-D-glucosamine: step 4/6. In terms of biological role, hydrolyzes the pyrophosphate bond of UDP-2,3-diacylglucosamine to yield 2,3-diacylglucosamine 1-phosphate (lipid X) and UMP by catalyzing the attack of water at the alpha-P atom. Involved in the biosynthesis of lipid A, a phosphorylated glycolipid that anchors the lipopolysaccharide to the outer membrane of the cell. The chain is UDP-2,3-diacylglucosamine hydrolase from Pseudomonas entomophila (strain L48).